The sequence spans 427 residues: 3-phosphoshikimate 1-carboxyvinyltransferase (427 aa).

3-phosphoshikimate contacts are provided by Lys-22, Ser-23, and Arg-27. Lys-22 contributes to the phosphoenolpyruvate binding site. Gly-96 and Arg-124 together coordinate phosphoenolpyruvate. 3-phosphoshikimate-binding residues include Ser-169, Ser-170, Gln-171, Ser-197, Asp-313, Asn-336, and Lys-340. Gln-171 is a binding site for phosphoenolpyruvate. Residue Asp-313 is the Proton acceptor of the active site. Phosphoenolpyruvate contacts are provided by Arg-344, Arg-386, and Lys-411.

Belongs to the EPSP synthase family. As to quaternary structure, monomer.

Its subcellular location is the cytoplasm. It catalyses the reaction 3-phosphoshikimate + phosphoenolpyruvate = 5-O-(1-carboxyvinyl)-3-phosphoshikimate + phosphate. It participates in metabolic intermediate biosynthesis; chorismate biosynthesis; chorismate from D-erythrose 4-phosphate and phosphoenolpyruvate: step 6/7. Functionally, catalyzes the transfer of the enolpyruvyl moiety of phosphoenolpyruvate (PEP) to the 5-hydroxyl of shikimate-3-phosphate (S3P) to produce enolpyruvyl shikimate-3-phosphate and inorganic phosphate. This Salmonella dublin (strain CT_02021853) protein is 3-phosphoshikimate 1-carboxyvinyltransferase.